The chain runs to 519 residues: Cytochrome P450 monooxygenase FPY7 (519 aa).

Residues 12 to 34 (SLSLRWKIIVTLLAIYTLRIIGT) form a helical membrane-spanning segment. C465 provides a ligand contact to heme.

The protein belongs to the cytochrome P450 family. Requires heme as cofactor.

It is found in the membrane. It functions in the pathway secondary metabolite biosynthesis. Functionally, cytochrome P450 monooxygenase; part of the gene cluster that mediates the biosynthesis of the gamma-pyrones fusapyrone (FPY) and deoxyfusapyrone (dFPY). FPY is an undecaketide and thus likely synthesized by the polyketide synthase FPY1 from acetyl-CoA functioning as starter unit and the addition of 10 malonyl-CoA extender units by successive Claisen-condensations. Next to this, FPY shares some rare features: C-glycosylated 4-deoxyglucose at C-3, a gem-dimethyl group at C-13, and an alpha-beta to beta-gamma double bond shift at C-20. During FPY biosynthesis mono-C-methyl groups are transferred to the tetra-, penta-, hexa- and heptaketide, while two C-methyl groups are transferred to the nonaketide, suggesting that the CMet domain is programmed to selectively catalyze two successive C-alpha-methylation reactions of the nonaketide, while other alpha-carbons are non- or mono-methylated only. While the origin of the 4'-deoxyglucose moiety remains opaque, its transfer to C-3 is most likely mediated by the C-glycosyltransferase FPY2. Next to this, the hydroxyl group present at C-33 and discriminating between FPY and dFPY, is likely to be installed by the cytochrome P450 monooxygenase FPY7. No putative function can be predicted for the remaining genes FPY3-FPY6. The sequence is that of Cytochrome P450 monooxygenase FPY7 from Fusarium mangiferae (Mango malformation disease fungus).